Consider the following 316-residue polypeptide: Ornithine carbamoyltransferase (316 aa).

Residues 57-60 (STRT), Gln-84, Arg-108, and 135-138 (HPCQ) each bind carbamoyl phosphate. L-ornithine-binding positions include Asn-166, Asp-230, and 234-235 (SM). Residues 269-270 (CL) and Arg-297 contribute to the carbamoyl phosphate site.

The protein belongs to the aspartate/ornithine carbamoyltransferase superfamily. OTCase family.

The protein resides in the cytoplasm. The enzyme catalyses carbamoyl phosphate + L-ornithine = L-citrulline + phosphate + H(+). It functions in the pathway amino-acid degradation; L-arginine degradation via ADI pathway; carbamoyl phosphate from L-arginine: step 2/2. Its function is as follows. Reversibly catalyzes the transfer of the carbamoyl group from carbamoyl phosphate (CP) to the N(epsilon) atom of ornithine (ORN) to produce L-citrulline. The chain is Ornithine carbamoyltransferase from Bacillus cereus (strain AH187).